A 364-amino-acid chain; its full sequence is D-alanine--D-alanine ligase A (364 aa).

An ATP-grasp domain is found at 145–348 (KRLLRDAGLN…YTDLITRLIE (204 aa)). 175-230 (ESKLGLPLFVKPANQGSSVGVSKVTSEEQYAIAVDLAFEFDHKVIVEQGIKGREIE) is a binding site for ATP. Mg(2+)-binding residues include Asp-302, Glu-315, and Asn-317.

It belongs to the D-alanine--D-alanine ligase family. Mg(2+) is required as a cofactor. The cofactor is Mn(2+).

The protein localises to the cytoplasm. It carries out the reaction 2 D-alanine + ATP = D-alanyl-D-alanine + ADP + phosphate + H(+). It functions in the pathway cell wall biogenesis; peptidoglycan biosynthesis. Its function is as follows. Cell wall formation. The chain is D-alanine--D-alanine ligase A (ddlA) from Escherichia coli O157:H7.